The primary structure comprises 140 residues: T cell receptor alpha chain constant (140 aa).

One can recognise an Ig-like C1-type domain in the interval 19 to 107; the sequence is KSVCLFTDFD…LVEKSFETDT (89 aa). The cysteines at positions 22 and 72 are disulfide-linked. Residues N32, N66, N77, and N113 are each glycosylated (N-linked (GlcNAc...) asparagine). The segment at 94 to 115 is connecting peptide; sequence CDVKLVEKSFETDTNLNFQNLS. The helical transmembrane segment at 116-138 threads the bilayer; sequence VIGFRILLLKVAGFNLLMTLRLW. Residues 139–140 lie on the Cytoplasmic side of the membrane; the sequence is SS.

Alpha-beta TR is a heterodimer composed of an alpha and beta chain; disulfide-linked. The alpha-beta TR is associated with the transmembrane signaling CD3 coreceptor proteins to form the TR-CD3 (TcR or TCR). The assembly of alpha-beta TR heterodimers with CD3 occurs in the endoplasmic reticulum where a single alpha-beta TR heterodimer associates with one CD3D-CD3E heterodimer, one CD3G-CD3E heterodimer and one CD247 homodimer forming a stable octameric structure. CD3D-CD3E and CD3G-CD3E heterodimers preferentially associate with TR alpha and TR beta chains, respectively. The association of the CD247 homodimer is the last step of TcR assembly in the endoplasmic reticulum and is required for transport to the cell surface.

It localises to the cell membrane. Its function is as follows. Constant region of T cell receptor (TR) alpha chain. Alpha-beta T cell receptors are antigen specific receptors which are essential to the immune response and are present on the cell surface of T lymphocytes. Recognize peptide-major histocompatibility (MH) (pMH) complexes that are displayed by antigen presenting cells (APC), a prerequisite for efficient T cell adaptive immunity against pathogens. Binding of alpha-beta TR to pMH complex initiates TR-CD3 clustering on the cell surface and intracellular activation of LCK that phosphorylates the ITAM motifs of CD3G, CD3D, CD3E and CD247 enabling the recruitment of ZAP70. In turn, ZAP70 phosphorylates LAT, which recruits numerous signaling molecules to form the LAT signalosome. The LAT signalosome propagates signal branching to three major signaling pathways, the calcium, the mitogen-activated protein kinase (MAPK) kinase and the nuclear factor NF-kappa-B (NF-kB) pathways, leading to the mobilization of transcription factors that are critical for gene expression and essential for T cell growth and differentiation. The T cell repertoire is generated in the thymus, by V-(D)-J rearrangement. This repertoire is then shaped by intrathymic selection events to generate a peripheral T cell pool of self-MH restricted, non-autoaggressive T cells. Post-thymic interaction of alpha-beta TR with the pMH complexes shapes TR structural and functional avidity. The sequence is that of T cell receptor alpha chain constant from Homo sapiens (Human).